The following is a 372-amino-acid chain: Probable arabinan endo-1,5-alpha-L-arabinosidase B (372 aa).

The first 16 residues, 1–16, serve as a signal peptide directing secretion; it reads MTVLVALFCLVTWTLC. The segment covering 23–34 has biased composition (low complexity); it reads STQGTQQPQQPE. The disordered stretch occupies residues 23–52; it reads STQGTQQPQQPEKTPHPHPQPEDAFPPTHA. D59 functions as the Proton acceptor in the catalytic mechanism. N120 carries an N-linked (GlcNAc...) asparagine glycan. The active-site Proton donor is E252. An N-linked (GlcNAc...) asparagine glycan is attached at N363.

Belongs to the glycosyl hydrolase 43 family.

The protein localises to the secreted. The enzyme catalyses Endohydrolysis of (1-&gt;5)-alpha-arabinofuranosidic linkages in (1-&gt;5)-arabinans.. Its pathway is glycan metabolism; L-arabinan degradation. Functionally, endo-1,5-alpha-L-arabinanase involved in degradation of pectin. Its preferred substrate is linear 1,5-alpha-L-arabinan. The chain is Probable arabinan endo-1,5-alpha-L-arabinosidase B (abnB) from Aspergillus fumigatus (strain CBS 144.89 / FGSC A1163 / CEA10) (Neosartorya fumigata).